The following is a 426-amino-acid chain: Histidinol dehydrogenase (426 aa).

Y126, Q188, and N210 together coordinate NAD(+). Positions 233, 255, and 258 each coordinate substrate. Positions 255 and 258 each coordinate Zn(2+). Catalysis depends on proton acceptor residues E323 and H324. 4 residues coordinate substrate: H324, D357, E411, and H416. Position 357 (D357) interacts with Zn(2+). A Zn(2+)-binding site is contributed by H416.

Belongs to the histidinol dehydrogenase family. Requires Zn(2+) as cofactor.

It carries out the reaction L-histidinol + 2 NAD(+) + H2O = L-histidine + 2 NADH + 3 H(+). Its pathway is amino-acid biosynthesis; L-histidine biosynthesis; L-histidine from 5-phospho-alpha-D-ribose 1-diphosphate: step 9/9. Functionally, catalyzes the sequential NAD-dependent oxidations of L-histidinol to L-histidinaldehyde and then to L-histidine. In Heliobacterium mobile (Heliobacillus mobilis), this protein is Histidinol dehydrogenase.